We begin with the raw amino-acid sequence, 327 residues long: Porphobilinogen deaminase (327 aa).

Cys-251 carries the post-translational modification S-(dipyrrolylmethanemethyl)cysteine.

It belongs to the HMBS family. Dipyrromethane serves as cofactor.

It catalyses the reaction 4 porphobilinogen + H2O = hydroxymethylbilane + 4 NH4(+). Its pathway is porphyrin-containing compound metabolism; protoporphyrin-IX biosynthesis; coproporphyrinogen-III from 5-aminolevulinate: step 2/4. Its function is as follows. Tetrapolymerization of the monopyrrole PBG into the hydroxymethylbilane pre-uroporphyrinogen in several discrete steps. The sequence is that of Porphobilinogen deaminase (HEM3) from Kluyveromyces lactis (strain ATCC 8585 / CBS 2359 / DSM 70799 / NBRC 1267 / NRRL Y-1140 / WM37) (Yeast).